The following is a 416-amino-acid chain: Adenylosuccinate synthetase (416 aa).

GTP is bound by residues 13 to 19 (GDEGKGK) and 41 to 43 (GHT). D14 functions as the Proton acceptor in the catalytic mechanism. Mg(2+)-binding residues include D14 and G41. IMP contacts are provided by residues 14–17 (DEGK), 39–42 (NAGH), T126, R140, Q220, T235, and R299. H42 functions as the Proton donor in the catalytic mechanism. 295–301 (VSTGRKR) provides a ligand contact to substrate. GTP is bound by residues R301, 327-329 (KLD), and 405-407 (STS).

This sequence belongs to the adenylosuccinate synthetase family. In terms of assembly, homodimer. Requires Mg(2+) as cofactor.

Its subcellular location is the cytoplasm. It carries out the reaction IMP + L-aspartate + GTP = N(6)-(1,2-dicarboxyethyl)-AMP + GDP + phosphate + 2 H(+). The protein operates within purine metabolism; AMP biosynthesis via de novo pathway; AMP from IMP: step 1/2. Plays an important role in the de novo pathway of purine nucleotide biosynthesis. Catalyzes the first committed step in the biosynthesis of AMP from IMP. In Campylobacter jejuni subsp. jejuni serotype O:2 (strain ATCC 700819 / NCTC 11168), this protein is Adenylosuccinate synthetase.